The chain runs to 40 residues: SDGRNTAANDKASDLMALRDGCCPNPSCSVNNPDICGGGR.

Positions S1–R19 are excised as a propeptide. 2 cysteine pairs are disulfide-bonded: C22/C28 and C23/C36. A lacks the Ser-Xaa-Pro motif that is crucial for potent interaction with nAChR region spans residues P24–P26. At C36 the chain carries Cysteine amide. Residues G37–R40 constitute a propeptide that is removed on maturation.

The protein belongs to the conotoxin A superfamily. In terms of tissue distribution, expressed by the venom duct.

Its subcellular location is the secreted. In terms of biological role, alpha-conotoxins act on postsynaptic membranes, they bind to the nicotinic acetylcholine receptors (nAChR) and thus inhibit them. Has possibly a distinct nAChR binding mode from other alpha-conotoxins, due to a different three residue motif (lacks the Ser-Xaa-Pro motif). This is Alpha-conotoxin-like Qc1.4b from Conus quercinus (Oak cone).